The sequence spans 115 residues: Cycloviolacin-O13 (115 aa).

Positions 1 to 22 are cleaved as a signal peptide; the sequence is MDAKKMFVALVLIATFALPSLA. A propeptide spanning residues 23–81 is cleaved from the precursor; that stretch reads TFEKDFITPETIQAILKKSAPLSNIMLEEDVINALLKSKTVISNPIIEEAFLKNSNGLN. Positions 82-111 form a cross-link, cyclopeptide (Gly-Asn); it reads GIPCGESCVWIPCISAAIGCSCKSKVCYRN. Cystine bridges form between Cys-85-Cys-101, Cys-89-Cys-103, and Cys-94-Cys-108. The propeptide occupies 112–115; it reads SLDN.

Cycloviolacin-O13 is a cyclic peptide. As to expression, expressed in leaves, petals, petioles, roots and runners (at protein level).

Probably participates in a plant defense mechanism. Has hemolytic activity. In Viola odorata (Sweet violet), this protein is Cycloviolacin-O13.